A 212-amino-acid polypeptide reads, in one-letter code: NAD(P)H dehydrogenase (quinone) 3 (212 aa).

Residues 4-192 (MLVLYYSSYG…DGARFQGRHV (189 aa)) form the Flavodoxin-like domain. FMN contacts are provided by residues 10-15 (SSYGHI) and 78-80 (TRF). An NAD(+)-binding site is contributed by Y12. Substrate is bound at residue W98. FMN is bound by residues 113 to 119 (STGSQHG) and H134. Positions 161-182 (YGASTLAEDENHRDRSPSANEL) are disordered.

This sequence belongs to the WrbA family. FMN serves as cofactor.

The catalysed reaction is a quinone + NADH + H(+) = a quinol + NAD(+). It carries out the reaction a quinone + NADPH + H(+) = a quinol + NADP(+). This chain is NAD(P)H dehydrogenase (quinone) 3, found in Rhizobium meliloti (strain 1021) (Ensifer meliloti).